A 134-amino-acid polypeptide reads, in one-letter code: Large ribosomal subunit protein bL19 (134 aa).

Positions Lys108–Glu134 are disordered. Residues Arg111–Lys123 are compositionally biased toward basic and acidic residues. The segment covering Gln125 to Glu134 has biased composition (low complexity).

This sequence belongs to the bacterial ribosomal protein bL19 family.

Its function is as follows. This protein is located at the 30S-50S ribosomal subunit interface and may play a role in the structure and function of the aminoacyl-tRNA binding site. In Methylorubrum extorquens (strain PA1) (Methylobacterium extorquens), this protein is Large ribosomal subunit protein bL19.